A 974-amino-acid chain; its full sequence is Probable proton ATPase 1B (974 aa).

The segment covering 1–23 (MSSKKYELDAAAFEDKPESHSDA) has biased composition (basic and acidic residues). Residues 1-61 (MSSKKYELDA…ATDLLPPSKG (61 aa)) form a disordered region. 4 helical membrane passes run 93-112 (GLWGPMPAALWIAIIIEFAL), 118-137 (GAILFAIQIANATIGWYETI), 265-286 (VMLALCAISFILCMCCFIYLLA), and 295-321 (ALQFAVVVLVVSIPIALEIVVTTTLAV). The active-site 4-aspartylphosphate intermediate is the Asp351. Helical transmembrane passes span 631–651 (AAADMVLTEPGLSVVVEAMLV), 662–684 (FLTYRISATLQLVCFFFIACFSL), 698–712 (FFHLPVLMFMLITLL), 738–761 (VVFVSASILAAVACGSSLMLLWIG), 813–840 (FFFYVPPSPILFCGAIISLLVSTMAASF), and 869–887 (VWIYCIVWWFVQDVVKVLA). The disordered stretch occupies residues 952-974 (REDTHVLNESTSPVNAFSPKVKK).

This sequence belongs to the cation transport ATPase (P-type) (TC 3.A.3) family. Type IIIA subfamily.

Its subcellular location is the membrane. The enzyme catalyses ATP + H2O + H(+)(in) = ADP + phosphate + 2 H(+)(out). The protein is Probable proton ATPase 1B (H1B) of Leishmania donovani.